Here is a 601-residue protein sequence, read N- to C-terminus: Proline--tRNA ligase (601 aa).

The protein belongs to the class-II aminoacyl-tRNA synthetase family. ProS type 1 subfamily. In terms of assembly, homodimer.

It localises to the cytoplasm. It carries out the reaction tRNA(Pro) + L-proline + ATP = L-prolyl-tRNA(Pro) + AMP + diphosphate. Its function is as follows. Catalyzes the attachment of proline to tRNA(Pro) in a two-step reaction: proline is first activated by ATP to form Pro-AMP and then transferred to the acceptor end of tRNA(Pro). As ProRS can inadvertently accommodate and process non-cognate amino acids such as alanine and cysteine, to avoid such errors it has two additional distinct editing activities against alanine. One activity is designated as 'pretransfer' editing and involves the tRNA(Pro)-independent hydrolysis of activated Ala-AMP. The other activity is designated 'posttransfer' editing and involves deacylation of mischarged Ala-tRNA(Pro). The misacylated Cys-tRNA(Pro) is not edited by ProRS. This is Proline--tRNA ligase from Tropheryma whipplei (strain TW08/27) (Whipple's bacillus).